We begin with the raw amino-acid sequence, 396 residues long: Na(+)/H(+) antiporter NhaA (396 aa).

The next 11 helical transmembrane spans lie at 16–36 (GIIL…GLAG), 59–79 (LLLW…GLEV), 95–115 (TFPA…YAFF), 124–144 (AGWA…MALL), 154–174 (VFLL…IALF), 178–198 (QLSL…LWMN), 213–233 (LVLW…GVIV), 254–274 (ALHP…NAGV), 278–298 (GIGL…GLFI), 328–348 (IFAV…IASL), and 363–383 (LGIL…LRIA).

This sequence belongs to the NhaA Na(+)/H(+) (TC 2.A.33) antiporter family.

It localises to the cell inner membrane. The catalysed reaction is Na(+)(in) + 2 H(+)(out) = Na(+)(out) + 2 H(+)(in). In terms of biological role, na(+)/H(+) antiporter that extrudes sodium in exchange for external protons. The sequence is that of Na(+)/H(+) antiporter NhaA from Aeromonas hydrophila subsp. hydrophila (strain ATCC 7966 / DSM 30187 / BCRC 13018 / CCUG 14551 / JCM 1027 / KCTC 2358 / NCIMB 9240 / NCTC 8049).